The sequence spans 561 residues: Asparagine synthetase [glutamine-hydrolyzing] (561 aa).

Cys-2 functions as the For GATase activity in the catalytic mechanism. The 190-residue stretch at 2–191 (CGIWALFGSD…PGHYEVLDLK (190 aa)) folds into the Glutamine amidotransferase type-2 domain. Residues 49–53 (RLAVV), 75–77 (NGE), and Asp-97 each bind L-glutamine. An Asparagine synthetase domain is found at 213 to 536 (HALYDNVEKL…PGRADWLSHY (324 aa)). ATP is bound by residues Leu-256, Ile-288, and 363–364 (SG). Lys-385 is subject to N6-acetyllysine. Thr-545 bears the Phosphothreonine mark. A Phosphoserine modification is found at Ser-557.

The enzyme catalyses L-aspartate + L-glutamine + ATP + H2O = L-asparagine + L-glutamate + AMP + diphosphate + H(+). It participates in amino-acid biosynthesis; L-asparagine biosynthesis; L-asparagine from L-aspartate (L-Gln route): step 1/1. The protein is Asparagine synthetase [glutamine-hydrolyzing] (ASNS) of Pongo abelii (Sumatran orangutan).